Consider the following 270-residue polypeptide: Putative phosphoenolpyruvate synthase regulatory protein (270 aa).

Position 150-157 (150-157 (GVSRCGKT)) interacts with ADP.

Belongs to the pyruvate, phosphate/water dikinase regulatory protein family. PSRP subfamily.

It carries out the reaction [pyruvate, water dikinase] + ADP = [pyruvate, water dikinase]-phosphate + AMP + H(+). It catalyses the reaction [pyruvate, water dikinase]-phosphate + phosphate + H(+) = [pyruvate, water dikinase] + diphosphate. Bifunctional serine/threonine kinase and phosphorylase involved in the regulation of the phosphoenolpyruvate synthase (PEPS) by catalyzing its phosphorylation/dephosphorylation. The protein is Putative phosphoenolpyruvate synthase regulatory protein of Shewanella loihica (strain ATCC BAA-1088 / PV-4).